The sequence spans 452 residues: UDP-N-acetylmuramoylalanine--D-glutamate ligase (452 aa).

ATP is bound at residue 119–125 (GSNGKTT).

This sequence belongs to the MurCDEF family.

Its subcellular location is the cytoplasm. The enzyme catalyses UDP-N-acetyl-alpha-D-muramoyl-L-alanine + D-glutamate + ATP = UDP-N-acetyl-alpha-D-muramoyl-L-alanyl-D-glutamate + ADP + phosphate + H(+). It functions in the pathway cell wall biogenesis; peptidoglycan biosynthesis. Its function is as follows. Cell wall formation. Catalyzes the addition of glutamate to the nucleotide precursor UDP-N-acetylmuramoyl-L-alanine (UMA). In Streptococcus pyogenes serotype M4 (strain MGAS10750), this protein is UDP-N-acetylmuramoylalanine--D-glutamate ligase.